The chain runs to 59 residues: Protein ORF5a (59 aa).

The helical; Signal-anchor for type III membrane protein transmembrane segment at 13–33 threads the bilayer; the sequence is VIYDCIAILALGCAITCLLLI.

It is found in the membrane. This Equine arteritis virus (strain Bucyrus) (EAV) protein is Protein ORF5a (GP5).